A 428-amino-acid polypeptide reads, in one-letter code: 3-phosphoshikimate 1-carboxyvinyltransferase (428 aa).

Residues Lys-22, Ser-23, and Arg-27 each contribute to the 3-phosphoshikimate site. Phosphoenolpyruvate is bound at residue Lys-22. 2 residues coordinate phosphoenolpyruvate: Gly-94 and Arg-122. Residues Ser-169, Ser-170, Gln-171, Ser-197, Asp-315, and Lys-342 each contribute to the 3-phosphoshikimate site. Position 171 (Gln-171) interacts with phosphoenolpyruvate. Asp-315 serves as the catalytic Proton acceptor. Phosphoenolpyruvate contacts are provided by Arg-346, Arg-389, and Lys-414.

This sequence belongs to the EPSP synthase family. Monomer.

Its subcellular location is the cytoplasm. The catalysed reaction is 3-phosphoshikimate + phosphoenolpyruvate = 5-O-(1-carboxyvinyl)-3-phosphoshikimate + phosphate. Its pathway is metabolic intermediate biosynthesis; chorismate biosynthesis; chorismate from D-erythrose 4-phosphate and phosphoenolpyruvate: step 6/7. Its function is as follows. Catalyzes the transfer of the enolpyruvyl moiety of phosphoenolpyruvate (PEP) to the 5-hydroxyl of shikimate-3-phosphate (S3P) to produce enolpyruvyl shikimate-3-phosphate and inorganic phosphate. The protein is 3-phosphoshikimate 1-carboxyvinyltransferase of Cellvibrio japonicus (strain Ueda107) (Pseudomonas fluorescens subsp. cellulosa).